A 308-amino-acid polypeptide reads, in one-letter code: Transaldolase (308 aa).

The active-site Schiff-base intermediate with substrate is the Lys125.

Belongs to the transaldolase family. Type 1 subfamily. As to quaternary structure, homodimer.

The protein localises to the cytoplasm. The catalysed reaction is D-sedoheptulose 7-phosphate + D-glyceraldehyde 3-phosphate = D-erythrose 4-phosphate + beta-D-fructose 6-phosphate. Its pathway is carbohydrate degradation; pentose phosphate pathway; D-glyceraldehyde 3-phosphate and beta-D-fructose 6-phosphate from D-ribose 5-phosphate and D-xylulose 5-phosphate (non-oxidative stage): step 2/3. Its function is as follows. Transaldolase is important for the balance of metabolites in the pentose-phosphate pathway. The polypeptide is Transaldolase (Pseudomonas putida (strain GB-1)).